Consider the following 81-residue polypeptide: Photosystem I iron-sulfur center (81 aa).

4Fe-4S ferredoxin-type domains lie at 2 to 31 (SHAVKIYDTCIGCTQCVRACPLDVLEMVPW) and 39 to 68 (IASSPRTEDCVGCKRCETACPTDFLSIRVY). Cysteine 11, cysteine 14, cysteine 17, cysteine 21, cysteine 48, cysteine 51, cysteine 54, and cysteine 58 together coordinate [4Fe-4S] cluster.

The cyanobacterial PSI reaction center is composed of one copy each of PsaA,B,C,D,E,F,I,J,K,L,M and X, and forms trimeric complexes. [4Fe-4S] cluster serves as cofactor.

It is found in the cellular thylakoid membrane. The enzyme catalyses reduced [plastocyanin] + hnu + oxidized [2Fe-2S]-[ferredoxin] = oxidized [plastocyanin] + reduced [2Fe-2S]-[ferredoxin]. Apoprotein for the two 4Fe-4S centers FA and FB of photosystem I (PSI); essential for photochemical activity. FB is the terminal electron acceptor of PSI, donating electrons to ferredoxin. The C-terminus interacts with PsaA/B/D and helps assemble the protein into the PSI complex. Required for binding of PsaD and PsaE to PSI. PSI is a plastocyanin/cytochrome c6-ferredoxin oxidoreductase, converting photonic excitation into a charge separation, which transfers an electron from the donor P700 chlorophyll pair to the spectroscopically characterized acceptors A0, A1, FX, FA and FB in turn. The sequence is that of Photosystem I iron-sulfur center from Prochlorococcus marinus (strain MIT 9312).